The chain runs to 135 residues: Putative pre-16S rRNA nuclease (135 aa).

This sequence belongs to the YqgF nuclease family.

It is found in the cytoplasm. Could be a nuclease involved in processing of the 5'-end of pre-16S rRNA. This is Putative pre-16S rRNA nuclease from Thermus thermophilus (strain ATCC 27634 / DSM 579 / HB8).